Consider the following 660-residue polypeptide: ATP-dependent zinc metalloprotease FtsH (660 aa).

The tract at residues Met-1 to Asp-20 is disordered. The Cytoplasmic segment spans residues Met-1–Arg-24. The helical transmembrane segment at Ile-25–His-45 threads the bilayer. Residues Ala-46–Pro-118 are Extracellular-facing. A helical membrane pass occupies residues Gly-119–Val-139. The Cytoplasmic segment spans residues Tyr-140–Ser-660. Gly-213–Thr-220 provides a ligand contact to ATP. His-435 serves as a coordination point for Zn(2+). Glu-436 is an active-site residue. Zn(2+) is bound by residues His-439 and Asp-511.

The protein in the central section; belongs to the AAA ATPase family. It in the C-terminal section; belongs to the peptidase M41 family. As to quaternary structure, homohexamer. It depends on Zn(2+) as a cofactor.

Its subcellular location is the cell membrane. Its function is as follows. Acts as a processive, ATP-dependent zinc metallopeptidase for both cytoplasmic and membrane proteins. Plays a role in the quality control of integral membrane proteins. This Acidimicrobium ferrooxidans (strain DSM 10331 / JCM 15462 / NBRC 103882 / ICP) protein is ATP-dependent zinc metalloprotease FtsH.